We begin with the raw amino-acid sequence, 502 residues long: UPF0371 protein CTC_00401 (502 aa).

It belongs to the UPF0371 family.

This chain is UPF0371 protein CTC_00401, found in Clostridium tetani (strain Massachusetts / E88).